The chain runs to 246 residues: MQHQDVAIIIPSRLSSTRLKQKPLQLIGSITLIERVFKQVNQAGLKHTYVATDSEEIASVIKKVGGKVIFTDSAIPTGTDRTYEAFKLIPNNQNINYIVNVQGDMPFIEPSSILKIIEYLKNSEYDIVTPIVKVDRESVEASSNVTVAVDSAGTALYFSRSLIPNGAEEFLYHVGMYGFRKNALEKFVSLKPTFLEKTERLEQLRVLENGMTIGTCLVENVPISVDTEEDLKKAVKFYENISKLGL.

Belongs to the KdsB family.

The protein resides in the cytoplasm. It carries out the reaction 3-deoxy-alpha-D-manno-oct-2-ulosonate + CTP = CMP-3-deoxy-beta-D-manno-octulosonate + diphosphate. Its pathway is nucleotide-sugar biosynthesis; CMP-3-deoxy-D-manno-octulosonate biosynthesis; CMP-3-deoxy-D-manno-octulosonate from 3-deoxy-D-manno-octulosonate and CTP: step 1/1. The protein operates within bacterial outer membrane biogenesis; lipopolysaccharide biosynthesis. Its function is as follows. Activates KDO (a required 8-carbon sugar) for incorporation into bacterial lipopolysaccharide in Gram-negative bacteria. In Rickettsia massiliae (strain Mtu5), this protein is 3-deoxy-manno-octulosonate cytidylyltransferase.